The primary structure comprises 603 residues: NADH-ubiquinone oxidoreductase chain 5 (603 aa).

17 helical membrane-spanning segments follow: residues 4 to 24, 38 to 58, 87 to 107, 114 to 134, 140 to 160, 171 to 191, 210 to 230, 241 to 261, 272 to 292, 301 to 320, 325 to 347, 370 to 390, 407 to 429, 457 to 477, 482 to 502, 537 to 557, and 582 to 602; these read YATM…TTFI, SIVA…LCLD, MMFI…SLWY, INQF…LVTA, LFIG…WWYA, AILY…WFLL, LIPL…LGLH, TPVS…FLLI, LAQT…AVCA, IVAF…IGIG, AFLH…GSII, STSL…TGFY, WALS…MILL, LTIG…PTSV, IPLY…LTAL, IPYL…DLIW, and GLIK…LLLI.

The protein belongs to the complex I subunit 5 family. Core subunit of respiratory chain NADH dehydrogenase (Complex I) which is composed of 45 different subunits.

Its subcellular location is the mitochondrion inner membrane. The catalysed reaction is a ubiquinone + NADH + 5 H(+)(in) = a ubiquinol + NAD(+) + 4 H(+)(out). In terms of biological role, core subunit of the mitochondrial membrane respiratory chain NADH dehydrogenase (Complex I) which catalyzes electron transfer from NADH through the respiratory chain, using ubiquinone as an electron acceptor. Essential for the catalytic activity and assembly of complex I. The sequence is that of NADH-ubiquinone oxidoreductase chain 5 (MT-ND5) from Gorilla gorilla gorilla (Western lowland gorilla).